The sequence spans 230 residues: Sugar fermentation stimulation protein homolog (230 aa).

Belongs to the SfsA family.

The protein is Sugar fermentation stimulation protein homolog of Clostridium perfringens (strain 13 / Type A).